The following is a 177-amino-acid chain: Large ribosomal subunit protein uL6 (177 aa).

This sequence belongs to the universal ribosomal protein uL6 family. As to quaternary structure, part of the 50S ribosomal subunit.

Its function is as follows. This protein binds to the 23S rRNA, and is important in its secondary structure. It is located near the subunit interface in the base of the L7/L12 stalk, and near the tRNA binding site of the peptidyltransferase center. The chain is Large ribosomal subunit protein uL6 from Hydrogenovibrio crunogenus (strain DSM 25203 / XCL-2) (Thiomicrospira crunogena).